The chain runs to 822 residues: DNA gyrase subunit A (822 aa).

The Topo IIA-type catalytic domain occupies 32–497 (LPDVRDGLKP…QVLSLEDEDL (466 aa)). The active-site O-(5'-phospho-DNA)-tyrosine intermediate is Y120. The GyrA-box motif lies at 524–530 (QKRGGRG).

This sequence belongs to the type II topoisomerase GyrA/ParC subunit family. In terms of assembly, heterotetramer, composed of two GyrA and two GyrB chains. In the heterotetramer, GyrA contains the active site tyrosine that forms a transient covalent intermediate with DNA, while GyrB binds cofactors and catalyzes ATP hydrolysis.

The protein resides in the cytoplasm. The enzyme catalyses ATP-dependent breakage, passage and rejoining of double-stranded DNA.. Functionally, a type II topoisomerase that negatively supercoils closed circular double-stranded (ds) DNA in an ATP-dependent manner to modulate DNA topology and maintain chromosomes in an underwound state. Negative supercoiling favors strand separation, and DNA replication, transcription, recombination and repair, all of which involve strand separation. Also able to catalyze the interconversion of other topological isomers of dsDNA rings, including catenanes and knotted rings. Type II topoisomerases break and join 2 DNA strands simultaneously in an ATP-dependent manner. The sequence is that of DNA gyrase subunit A from Streptococcus pneumoniae serotype 4 (strain ATCC BAA-334 / TIGR4).